Reading from the N-terminus, the 69-residue chain is NADH dehydrogenase [ubiquinone] 1 beta subcomplex subunit 2 (69 aa).

Belongs to the complex I NDUFB2 subunit family. As to quaternary structure, complex I is composed of at least 49 different subunits.

The protein resides in the mitochondrion inner membrane. In terms of biological role, accessory subunit of the mitochondrial membrane respiratory chain NADH dehydrogenase (Complex I), that is believed not to be involved in catalysis. Complex I functions in the transfer of electrons from NADH to the respiratory chain. The immediate electron acceptor for the enzyme is believed to be ubiquinone. The protein is NADH dehydrogenase [ubiquinone] 1 beta subcomplex subunit 2 of Arabidopsis thaliana (Mouse-ear cress).